Reading from the N-terminus, the 632-residue chain is 2-hydroxyacyl-CoA lyase 2 (632 aa).

Residues 13–33 (LFPSFLLLACGTLVAALLGAA) traverse the membrane as a helical segment. Residue glutamate 98 participates in thiamine diphosphate binding. The interval 470-550 (DFVGTAAHLV…VMALVGNDAG (81 aa)) is thiamine pyrophosphate binding. The Mg(2+) site is built by aspartate 521 and asparagine 547.

This sequence belongs to the TPP enzyme family. The cofactor is Mg(2+). Requires thiamine diphosphate as cofactor. As to expression, expressed in all tissues tested, with highest expression in heart, pancreas and placenta.

The protein localises to the endoplasmic reticulum membrane. The enzyme catalyses 2-hydroxyoctadecanoyl-CoA = heptadecanal + formyl-CoA. It catalyses the reaction (2R)-hydroxyhexadecanoyl-CoA = pentadecanal + formyl-CoA. Endoplasmic reticulum 2-OH acyl-CoA lyase involved in the cleavage (C1 removal) reaction in the fatty acid alpha-oxydation in a thiamine pyrophosphate (TPP)-dependent manner. Involved in the phytosphingosine degradation pathway. This is 2-hydroxyacyl-CoA lyase 2 from Homo sapiens (Human).